The chain runs to 365 residues: Saoe class I histocompatibility antigen, C alpha chain (365 aa).

The first 24 residues, 1 to 24 (MTIMAPRTLLLLLSGALSVTETWA), serve as a signal peptide directing secretion. The segment at 25 to 114 (GSHSMRYFST…LLGYYNQSEA (90 aa)) is alpha-1. Residues 25 to 308 (GSHSMRYFST…EPPSQPTIPI (284 aa)) are Extracellular-facing. N-linked (GlcNAc...) asparagine glycosylation occurs at Asn-110. The interval 115-206 (GFHTIQWMYG…ENGKEMLQRA (92 aa)) is alpha-2. 2 disulfides stabilise this stretch: Cys-125-Cys-188 and Cys-227-Cys-283. An alpha-3 region spans residues 207–298 (EPPKTHVTHH…GLPEPFTLRW (92 aa)). The region spanning 209–297 (PKTHVTHHPV…EGLPEPFTLR (89 aa)) is the Ig-like C1-type domain. Residues 299-308 (EPPSQPTIPI) are connecting peptide. A helical membrane pass occupies residues 309-332 (MGIVAILAILGAVVTGAVVAAVMW). At 333 to 365 (RKKSSDKKGGSYSQAARSDSAQGSDVSLTACKV) the chain is on the cytoplasmic side. Positions 337 to 365 (SDKKGGSYSQAARSDSAQGSDVSLTACKV) are disordered. A compositionally biased stretch (polar residues) spans 346–359 (QAARSDSAQGSDVS). Ser-356 and Ser-359 each carry phosphoserine.

Belongs to the MHC class I family. In terms of assembly, heterodimer of an alpha chain and a beta chain (beta-2-microglobulin).

It is found in the membrane. In terms of biological role, involved in the presentation of foreign antigens to the immune system. This chain is Saoe class I histocompatibility antigen, C alpha chain, found in Saguinus oedipus (Cotton-top tamarin).